Consider the following 97-residue polypeptide: Protein RnfH (97 aa).

It belongs to the UPF0125 (RnfH) family.

This Proteus mirabilis (strain HI4320) protein is Protein RnfH.